Here is a 548-residue protein sequence, read N- to C-terminus: 4-methyl-5-nitrocatechol 5-monooxygenase (548 aa).

This sequence belongs to the PheA/TfdB FAD monooxygenase family. As to quaternary structure, monomer. The cofactor is FAD.

It carries out the reaction 4-methyl-5-nitrocatechol + NADPH + O2 = 2-hydroxy-5-methylquinone + nitrite + NADP(+) + H2O + H(+). The enzyme catalyses 4-methyl-5-nitrocatechol + NADH + O2 = 2-hydroxy-5-methylquinone + nitrite + NAD(+) + H2O + H(+). Activated by magnesium or manganese ions. Inhibited by concentrations of 4-methyl-5-nitrocatechol (MNC) above 2 mM. Its function is as follows. Involved in the degradation of 2,4-dinitrotoluene (2,4-DNT). Catalyzes the removal of the nitro group from 4-methyl-5-nitrocatechol (MNC) to yield 2-hydroxy-5-methylquinone. It can use both NADH and NADPH as electron donors, but prefers NADPH. Also able to use 4-nitrocatechol as substrate. The chain is 4-methyl-5-nitrocatechol 5-monooxygenase from Burkholderia sp.